The following is a 449-amino-acid chain: Chlorobenzene dioxygenase subunit alpha (449 aa).

One can recognise a Rieske domain in the interval 54–163 (WLLLGHETQI…VATYKGLIFA (110 aa)). Positions 96, 98, 116, and 119 each coordinate [2Fe-2S] cluster. His222, His228, and Asp376 together coordinate Fe cation.

It belongs to the bacterial ring-hydroxylating dioxygenase alpha subunit family. This dioxygenase system consists of four proteins: the two subunits of the oxygenase component (TecA1 and TecA2), a ferredoxin (TecA3) and a ferredoxin reductase (TecA4). The cofactor is [2Fe-2S] cluster. Requires Fe cation as cofactor.

The catalysed reaction is chlorobenzene + NADH + O2 + H(+) = (1R,2R)-3-chlorocyclohexa-3,5-diene-1,2-diol + NAD(+). Its pathway is aromatic compound metabolism. Part of the oxygenase component of the chlorobenzene dioxygenase system that catalyzes the dihydroxylation of a range of aromatic compounds, including chlorinated benzenes and toluenes, and dinuclear aromatics such as biphenyl and dibenzo-p-dioxin. The alpha subunit is responsible for substrate specificity. This is Chlorobenzene dioxygenase subunit alpha from Cupriavidus sp. (strain PS12).